The sequence spans 74 residues: uncharacterized protein (74 aa).

It is found in the mitochondrion. This is an uncharacterized protein from Marchantia polymorpha (Common liverwort).